Here is a 505-residue protein sequence, read N- to C-terminus: Lysine--tRNA ligase (505 aa).

Glu415 and Glu422 together coordinate Mg(2+).

This sequence belongs to the class-II aminoacyl-tRNA synthetase family. In terms of assembly, homodimer. It depends on Mg(2+) as a cofactor.

The protein localises to the cytoplasm. The catalysed reaction is tRNA(Lys) + L-lysine + ATP = L-lysyl-tRNA(Lys) + AMP + diphosphate. This is Lysine--tRNA ligase from Yersinia pseudotuberculosis serotype O:1b (strain IP 31758).